The following is a 376-amino-acid chain: uncharacterized protein (376 aa).

Composition is skewed to low complexity over residues 73-99 (NNSI…NNNN) and 228-243 (SSFS…TVSS). Disordered regions lie at residues 73-100 (NNSI…NNNL) and 222-269 (EQDP…KISD).

This is an uncharacterized protein from Saccharomyces cerevisiae (strain ATCC 204508 / S288c) (Baker's yeast).